Reading from the N-terminus, the 151-residue chain is SsrA-binding protein (151 aa).

The protein belongs to the SmpB family.

The protein resides in the cytoplasm. In terms of biological role, required for rescue of stalled ribosomes mediated by trans-translation. Binds to transfer-messenger RNA (tmRNA), required for stable association of tmRNA with ribosomes. tmRNA and SmpB together mimic tRNA shape, replacing the anticodon stem-loop with SmpB. tmRNA is encoded by the ssrA gene; the 2 termini fold to resemble tRNA(Ala) and it encodes a 'tag peptide', a short internal open reading frame. During trans-translation Ala-aminoacylated tmRNA acts like a tRNA, entering the A-site of stalled ribosomes, displacing the stalled mRNA. The ribosome then switches to translate the ORF on the tmRNA; the nascent peptide is terminated with the 'tag peptide' encoded by the tmRNA and targeted for degradation. The ribosome is freed to recommence translation, which seems to be the essential function of trans-translation. The chain is SsrA-binding protein from Campylobacter concisus (strain 13826).